The chain runs to 184 residues: Photosystem I assembly protein Ycf4 (184 aa).

2 consecutive transmembrane segments (helical) span residues asparagine 21–tyrosine 43 and leucine 58–leucine 80.

Belongs to the Ycf4 family.

Its subcellular location is the plastid. The protein localises to the chloroplast thylakoid membrane. Its function is as follows. Seems to be required for the assembly of the photosystem I complex. The polypeptide is Photosystem I assembly protein Ycf4 (Marchantia polymorpha (Common liverwort)).